A 345-amino-acid chain; its full sequence is MESTLGLEIIEVVEQAAIASAKWMGKGEKNTADQVAVEAMRERMNQIHMRGRIVIGEGERDDAPMLYIGEEVGICTREDAKAYCNPEELIEIDIAVDPCEGTNLVAYGQNGSMAVLAISEKGGLFAAPDFYMKKLAAPPAAKGKVDINKSATENLKILGECLERTVEELVVVVMDRPRHKELIQEIRDAGARVRLISDGDVSAAISCGFAGTNIHALMGIGAAPEGVISAAAMRCLGGHFQGQLIYDPEVVKTGLIGESREGNIARLKEMGIDDPDRVYTDSELASGETVLFAACGITPGTLMEGVRFFHGGARTQSLVISSQSKTARFVDTIHIQEQPKYIELK.

Aspartate 33, glutamate 57, aspartate 97, and glutamate 100 together coordinate Mn(2+). Residues glutamate 100–threonine 102, tyrosine 131, arginine 176–arginine 178, and aspartate 198–aspartate 200 contribute to the substrate site. Glutamate 225 contributes to the Mn(2+) binding site.

It belongs to the FBPase class 2 family. As to quaternary structure, homotetramer. Requires Mn(2+) as cofactor.

It catalyses the reaction beta-D-fructose 1,6-bisphosphate + H2O = beta-D-fructose 6-phosphate + phosphate. It carries out the reaction D-sedoheptulose 1,7-bisphosphate + H2O = D-sedoheptulose 7-phosphate + phosphate. The protein operates within carbohydrate biosynthesis; Calvin cycle. Functionally, catalyzes the hydrolysis of fructose 1,6-bisphosphate (Fru 1,6-P2) and sedoheptulose 1,7-bisphosphate (Sed 1,7-P2) to fructose 6-phosphate and sedoheptulose 7-phosphate, respectively. This chain is D-fructose 1,6-bisphosphatase class 2/sedoheptulose 1,7-bisphosphatase, found in Crocosphaera subtropica (strain ATCC 51142 / BH68) (Cyanothece sp. (strain ATCC 51142)).